The chain runs to 458 residues: Exodeoxyribonuclease 7 large subunit (458 aa).

It belongs to the XseA family. As to quaternary structure, heterooligomer composed of large and small subunits.

It localises to the cytoplasm. The catalysed reaction is Exonucleolytic cleavage in either 5'- to 3'- or 3'- to 5'-direction to yield nucleoside 5'-phosphates.. Functionally, bidirectionally degrades single-stranded DNA into large acid-insoluble oligonucleotides, which are then degraded further into small acid-soluble oligonucleotides. The protein is Exodeoxyribonuclease 7 large subunit of Escherichia coli O6:H1 (strain CFT073 / ATCC 700928 / UPEC).